The sequence spans 127 residues: Holo-[acyl-carrier-protein] synthase (127 aa).

The Mg(2+) site is built by Asp-7 and Glu-53.

It belongs to the P-Pant transferase superfamily. AcpS family. Mg(2+) is required as a cofactor.

The protein localises to the cytoplasm. The catalysed reaction is apo-[ACP] + CoA = holo-[ACP] + adenosine 3',5'-bisphosphate + H(+). Its function is as follows. Transfers the 4'-phosphopantetheine moiety from coenzyme A to a Ser of acyl-carrier-protein. This chain is Holo-[acyl-carrier-protein] synthase, found in Herpetosiphon aurantiacus (strain ATCC 23779 / DSM 785 / 114-95).